We begin with the raw amino-acid sequence, 391 residues long: Probable acridone synthase 4 (391 aa).

Cys-164 is an active-site residue.

It belongs to the thiolase-like superfamily. Chalcone/stilbene synthases family.

The enzyme catalyses N-methylanthraniloyl-CoA + 3 malonyl-CoA + 3 H(+) = 1,3-dihydroxy-N-methylacridone + 3 CO2 + 4 CoA + H2O. The chain is Probable acridone synthase 4 (ACS4) from Ruta graveolens (Common rue).